The primary structure comprises 347 residues: Transcription factor JunD (347 aa).

The interval methionine 1–serine 43 is disordered. A compositionally biased stretch (gly residues) spans glycine 13 to glycine 23. The Menin-binding motif (MBM) motif lies at serine 27 to alanine 39. Positions lysine 46–serine 55 match the MAP kinase docking motif; essential for its phosphorylation motif. Residues leucine 62 to glycine 86 form a disordered region. A compositionally biased stretch (low complexity) spans leucine 73–glycine 86. Serine 90 carries the phosphoserine modification. Serine 100 bears the Phosphoserine; by MAPK8 mark. The residue at position 117 (threonine 117) is a Phosphothreonine. Residues glutamine 244–aspartate 264 are disordered. Serine 251, serine 255, and serine 259 each carry phosphoserine. Residues arginine 268–arginine 295 form a basic motif region. The bZIP domain occupies arginine 268–histidine 331. Positions leucine 296–leucine 324 are leucine-zipper.

It belongs to the bZIP family. Jun subfamily. In terms of assembly, heterodimer; binds DNA as a heterodimer. Component of an AP-1 transcription factor complex composed of JUN-FOS heterodimers. As part of the AP-1 transcription factor complex, forms heterodimers with FOS proteins, thereby binding to the AP-1 consensus sequence and stimulating transcription. Forms heterodimers with FOSB; thereby binding to the AP-1 consensus sequence. Interacts (via MBM motif) with MEN1; this interaction represses transcriptional activation. Interacts with MAPK10; this interaction is inhibited in the presence of MEN1. Post-translationally, phosphorylated by MAP kinases MAPK8 and MAPK10; phosphorylation is inhibited in the presence of MEN1.

The protein resides in the nucleus. Transcription factor binding AP-1 sites. Heterodimerizes with proteins of the FOS family to form an AP-1 transcription factor complex, thereby enhancing their DNA binding activity to an AP-1 consensus sequence 3'-TGA[GC]TCA-5' and enhancing their transcriptional activity. The protein is Transcription factor JunD (JUND) of Homo sapiens (Human).